Consider the following 380-residue polypeptide: Probable protein phosphatase 2C 63 (380 aa).

Positions 35 to 338 constitute a PPM-type phosphatase domain; it reads DYSIAVVQAN…DDISVIVVYL (304 aa). Residues D66, G67, D270, and D329 each contribute to the Mn(2+) site.

The protein belongs to the PP2C family. The cofactor is Mg(2+). It depends on Mn(2+) as a cofactor.

It catalyses the reaction O-phospho-L-seryl-[protein] + H2O = L-seryl-[protein] + phosphate. The catalysed reaction is O-phospho-L-threonyl-[protein] + H2O = L-threonyl-[protein] + phosphate. Functionally, may dephosphorylate and repress plasma membrane H(+)-ATPases (PM H(+)-ATPases, e.g. AHA1 and AHA2), thus influencing negatively plant growth and fitness. This is Probable protein phosphatase 2C 63 from Arabidopsis thaliana (Mouse-ear cress).